The primary structure comprises 297 residues: Formamidopyrimidine-DNA glycosylase (297 aa).

The active-site Schiff-base intermediate with DNA is the Pro-2. The active-site Proton donor is the Glu-3. The active-site Proton donor; for beta-elimination activity is the Lys-58. Residues His-104, Arg-127, and Lys-170 each contribute to the DNA site. The segment at 261 to 297 (NVYDREGEACRTPGCTGTVERMTQAGRSTFHCPQCQR) adopts an FPG-type zinc-finger fold. Arg-287 serves as the catalytic Proton donor; for delta-elimination activity.

This sequence belongs to the FPG family. In terms of assembly, monomer. Zn(2+) serves as cofactor.

It catalyses the reaction Hydrolysis of DNA containing ring-opened 7-methylguanine residues, releasing 2,6-diamino-4-hydroxy-5-(N-methyl)formamidopyrimidine.. It carries out the reaction 2'-deoxyribonucleotide-(2'-deoxyribose 5'-phosphate)-2'-deoxyribonucleotide-DNA = a 3'-end 2'-deoxyribonucleotide-(2,3-dehydro-2,3-deoxyribose 5'-phosphate)-DNA + a 5'-end 5'-phospho-2'-deoxyribonucleoside-DNA + H(+). Its function is as follows. Involved in base excision repair of DNA damaged by oxidation or by mutagenic agents. Acts as a DNA glycosylase that recognizes and removes damaged bases. Has a preference for oxidized purines, such as 7,8-dihydro-8-oxoguanine (8-oxoG). Has AP (apurinic/apyrimidinic) lyase activity and introduces nicks in the DNA strand. Cleaves the DNA backbone by beta-delta elimination to generate a single-strand break at the site of the removed base with both 3'- and 5'-phosphates. The chain is Formamidopyrimidine-DNA glycosylase from Allorhizobium ampelinum (strain ATCC BAA-846 / DSM 112012 / S4) (Agrobacterium vitis (strain S4)).